Here is a 345-residue protein sequence, read N- to C-terminus: S-adenosylmethionine:tRNA ribosyltransferase-isomerase (345 aa).

It belongs to the QueA family. In terms of assembly, monomer.

The protein resides in the cytoplasm. The catalysed reaction is 7-aminomethyl-7-carbaguanosine(34) in tRNA + S-adenosyl-L-methionine = epoxyqueuosine(34) in tRNA + adenine + L-methionine + 2 H(+). Its pathway is tRNA modification; tRNA-queuosine biosynthesis. Its function is as follows. Transfers and isomerizes the ribose moiety from AdoMet to the 7-aminomethyl group of 7-deazaguanine (preQ1-tRNA) to give epoxyqueuosine (oQ-tRNA). In Azoarcus sp. (strain BH72), this protein is S-adenosylmethionine:tRNA ribosyltransferase-isomerase.